The sequence spans 87 residues: Lipid-anchored plasma membrane protein uvi15 (87 aa).

Residues 1–64 (MSAQQFYGDK…MYVQQPQASD (64 aa)) are disordered. The span at 18–41 (QQAYGGPNYYPPQQNYPQQGYAPP) shows a compositional bias: low complexity.

Belongs to the CYSTM1 family. Palmitoylated.

It is found in the cell membrane. Its subcellular location is the cell tip. Its function is as follows. Required for the maintenance of viability of cells in stationary phase and in starvation conditions. In Schizosaccharomyces pombe (strain 972 / ATCC 24843) (Fission yeast), this protein is Lipid-anchored plasma membrane protein uvi15 (uvi15).